Consider the following 555-residue polypeptide: Sulfite reductase [ferredoxin] 1 (555 aa).

Positions 69–161 (YTQREQGYDG…SVGLQTTEAC (93 aa)) form a cross-link, 3'-(S-cysteinyl)-tyrosine (Tyr-Cys). 4 residues coordinate [4Fe-4S] cluster: Cys417, Cys423, Cys463, and Cys467. Siroheme is bound at residue Cys467.

Belongs to the nitrite and sulfite reductase 4Fe-4S domain family. Monomer. The cofactor is siroheme. It depends on [4Fe-4S] cluster as a cofactor.

It catalyses the reaction hydrogen sulfide + 6 oxidized [2Fe-2S]-[ferredoxin] + 3 H2O = sulfite + 6 reduced [2Fe-2S]-[ferredoxin] + 7 H(+). Its function is as follows. Catalyzes the reduction of sulfite to sulfide, a step in the biosynthesis of sulfur-containing amino acids and cofactors. This chain is Sulfite reductase [ferredoxin] 1 (sir1), found in Mycolicibacterium paratuberculosis (strain ATCC BAA-968 / K-10) (Mycobacterium paratuberculosis).